Reading from the N-terminus, the 918-residue chain is Cell surface glycoprotein 1 (918 aa).

The first 34 residues, 1 to 34 (MTDTNEKIRSLFLTALMVFSVFAGTIAFSGGAAA), serve as a signal peptide directing secretion. N-linked (GlcNAc...) asparagine glycans are attached at residues Asn37, Asn56, Asn110, Asn219, Asn250, Asn261, and Asn291. The N-linked (GalNAc...) asparagine glycan is linked to Asn306. Residues Asn318, Asn343, Asn392, Asn434, Asn487, Asn541, Asn555, Asn572, Asn585, Asn614, Asn715, Asn776, Asn836, and Asn845 are each glycosylated (N-linked (GlcNAc...) asparagine). A disordered region spans residues 815–894 (HQDTNGNEAY…DESETTAAEG (80 aa)). Positions 833 to 846 (YTQNGSAVTDSANV) are enriched in polar residues. The span at 849-875 (VEEEQTEAPDTETETEAPDTETEEETD) shows a compositional bias: acidic residues. The chain crosses the membrane as a helical span at residues 894–914 (GPGFTAAIALIALVAAALLAV). The PGF sorting signal motif lies at 895-897 (PGF).

It belongs to the halobacterial S-layer protein family. In terms of processing, N-glycosylated on Asn-306; this N-linked glycan is a branched trisaccharide containing 2-amino-6-sulfo-2,6-dideoxy-glucose (sulfoquinovosamine). Post-translationally, cleaved by the archaeosortase ArtA at the C-terminus, with removal of a short hydrophobic segment. Lipidation.

It localises to the secreted. The protein localises to the cell wall. It is found in the S-layer. Its subcellular location is the cell membrane. In terms of biological role, S-layer protein. The S-layer is a paracrystalline mono-layered assembly of proteins which coat the surface of the cell. In H.hispanica, the S-layer contains two different glycoproteins, Slg1 and Slg2, which share highly similar amino acid sequences. The polypeptide is Cell surface glycoprotein 1 (Haloarcula hispanica (strain ATCC 33960 / DSM 4426 / JCM 8911 / NBRC 102182 / NCIMB 2187 / VKM B-1755)).